The sequence spans 122 residues: MARIAGVNIPTNKRVVIALQYIHGIGKKFAQEIVDKVGIPAERRVNQLTDAEVLQIRETIDRDYQVEGDLRREVSMNIKRLMDLGCYRGLRHRRSLPVRGQRTHTNARTRKGPAKSIAGKKK.

The disordered stretch occupies residues 95–122; it reads SLPVRGQRTHTNARTRKGPAKSIAGKKK.

The protein belongs to the universal ribosomal protein uS13 family. In terms of assembly, part of the 30S ribosomal subunit. Forms a loose heterodimer with protein S19. Forms two bridges to the 50S subunit in the 70S ribosome.

Located at the top of the head of the 30S subunit, it contacts several helices of the 16S rRNA. In the 70S ribosome it contacts the 23S rRNA (bridge B1a) and protein L5 of the 50S subunit (bridge B1b), connecting the 2 subunits; these bridges are implicated in subunit movement. Contacts the tRNAs in the A and P-sites. The polypeptide is Small ribosomal subunit protein uS13 (Mesorhizobium japonicum (strain LMG 29417 / CECT 9101 / MAFF 303099) (Mesorhizobium loti (strain MAFF 303099))).